The following is a 195-amino-acid chain: dTTP/UTP pyrophosphatase (195 aa).

The active-site Proton acceptor is the Asp-76.

The protein belongs to the Maf family. YhdE subfamily. A divalent metal cation serves as cofactor.

It is found in the cytoplasm. The catalysed reaction is dTTP + H2O = dTMP + diphosphate + H(+). The enzyme catalyses UTP + H2O = UMP + diphosphate + H(+). Nucleoside triphosphate pyrophosphatase that hydrolyzes dTTP and UTP. May have a dual role in cell division arrest and in preventing the incorporation of modified nucleotides into cellular nucleic acids. This Shewanella frigidimarina (strain NCIMB 400) protein is dTTP/UTP pyrophosphatase.